The chain runs to 476 residues: MSYAQTKTQTKSGYKAGVQDYRLTYYTPDYTPKDTDILAAFRVTPQPGVPFEEAAAAVAAESSTGTWTTVWTDLLTDLDRYKGRCYDIEPVPGEDNQFIAYIAYPLDLFEEGSITNVLTSIVGNVFGFKALRALRLEDIRFPVAYIKTFQGPPHGIQVERDKLNKYGRPLLGCTIKPKLGLSAKNYGRAVYECLRGGLDFTKDDENINSAPFQRWRDRFLFVSDAISKAQAETGEIKGHYLNVTAPTCEEMLKRAEYAKELNQPIIMHDYLTAGFTANTTLARWCRDNGVLLHIHRAMHAVIDRQKNHGIHFRVLAKALRLSGGDHIHTGTVVGKLEGERGITMGFVDLLRENYVEQDKSRGIYFTQDWASLPGVMAVASGGIHVWHMPALVEIFGDDSVLQFGGGTLGHPWGNAPGATANRVALEACVQARNEGRNLAREGNDVIREAAKWSPELAVACELWKEIKFEFEAMDTV.

2 residues coordinate substrate: N124 and T174. Catalysis depends on K176, which acts as the Proton acceptor. Residue K178 participates in substrate binding. Mg(2+) is bound by residues K202, D204, and E205. An N6-carboxylysine modification is found at K202. H295 functions as the Proton acceptor in the catalytic mechanism. Residues R296, H328, and S380 each contribute to the substrate site.

It belongs to the RuBisCO large chain family. Type I subfamily. In terms of assembly, heterohexadecamer of 8 large chains and 8 small chains; disulfide-linked. The disulfide link is formed within the large subunit homodimers. The cofactor is Mg(2+). The disulfide bond which can form in the large chain dimeric partners within the hexadecamer appears to be associated with oxidative stress and protein turnover.

It localises to the carboxysome. The catalysed reaction is 2 (2R)-3-phosphoglycerate + 2 H(+) = D-ribulose 1,5-bisphosphate + CO2 + H2O. The enzyme catalyses D-ribulose 1,5-bisphosphate + O2 = 2-phosphoglycolate + (2R)-3-phosphoglycerate + 2 H(+). RuBisCO catalyzes two reactions: the carboxylation of D-ribulose 1,5-bisphosphate, the primary event in carbon dioxide fixation, as well as the oxidative fragmentation of the pentose substrate in the photorespiration process. Both reactions occur simultaneously and in competition at the same active site. This Trichormus variabilis (strain ATCC 29413 / PCC 7937) (Anabaena variabilis) protein is Ribulose bisphosphate carboxylase large chain.